Here is a 1409-residue protein sequence, read N- to C-terminus: MAP kinase-activating death domain protein (1409 aa).

The 205-residue stretch at 26–230 (RGASQSSPDA…VPVPGKTKVQ (205 aa)) folds into the uDENN domain. Residues 251–390 (RFTLIDFPLH…DATHLKERLK (140 aa)) form the cDENN domain. The region spanning 392–496 (AINKMTTMTV…ECCLCPKNET (105 aa)) is the dDENN domain. 4 disordered regions span residues 654–701 (SFDH…MKGL), 761–784 (QHIVRSKTQPNPTSQQTANQQSKN), 902–1008 (SSSA…KVKT), and 1015–1034 (PQNLVPNNQPAQPSSPSFLA). 2 stretches are compositionally biased toward polar residues: residues 680-691 (SDASDTPTSRGS) and 761-772 (QHIVRSKTQPNP). Composition is skewed to low complexity over residues 773–784 (TSQQTANQQSKN) and 902–913 (SSSAPSTMTTPS). A compositionally biased stretch (basic and acidic residues) spans 915 to 925 (HSNDILKESRP). The segment covering 941–961 (LGQNVTPTSTNNHEIAQSTRS) has biased composition (polar residues). The span at 963–1003 (ALPPPVPPREAPPIPKRNPPPLGAPPKVPEGARAPPPLPPR) shows a compositional bias: pro residues. Low complexity predominate over residues 1020 to 1031 (PNNQPAQPSSPS). In terms of domain architecture, Death spans 1109–1184 (GMDQEPSEMI…GLVCSKEINK (76 aa)).

This sequence belongs to the MADD family. Interacts with cab-1. As to expression, expressed in nearly all neurons.

Its subcellular location is the cell membrane. It localises to the cytoplasm. Its function is as follows. Guanyl-nucleotide exchange factor that regulates small GTPases. Converts GDP-bound inactive form of rab-3 and cab-1 to the GTP-bound active forms. Regulator of presynaptic activity that interacts with rab-3 to regulate synaptic vesicle release. Is also a regulator of the cab-1 synaptic transmission pathway. Probably by converting rab-3 to its GTP-bound active form, plays a role in the recruitment of endophilin unc-57 to synaptic vesicles. Probably by activating rab-3 and thus regulating the trafficking of dense-core vesicles, plays a role in AVG neuron-mediated formation of the right axon tract of the ventral nerve cord. Regulates anterior body muscle contractions (aBOC) and the expulsion steps during the defecation motor program (DMP). Probably by regulating DMP, required for fatty acid uptake by intestinal cells. The sequence is that of MAP kinase-activating death domain protein (aex-3) from Caenorhabditis elegans.